Here is a 479-residue protein sequence, read N- to C-terminus: Deoxyribodipyrimidine photo-lyase (479 aa).

A Photolyase/cryptochrome alpha/beta domain is found at 6 to 137; the sequence is SLKAVWFRRD…PFYTFEDAYL (132 aa). Position 229 (Tyr229) interacts with FAD. Arg233 serves as a coordination point for DNA. FAD contacts are provided by residues 241-245 and 278-285; these read TSRLS and ELAWRDFY. Interaction with DNA stretches follow at residues 278 to 285 and 344 to 345; these read ELAWRDFY and NR. Residue 375–377 participates in FAD binding; the sequence is DYD. Residue Gln407 participates in DNA binding.

The protein belongs to the DNA photolyase class-1 family. In terms of assembly, monomer. FAD is required as a cofactor. (6R)-5,10-methylene-5,6,7,8-tetrahydrofolate serves as cofactor.

The catalysed reaction is cyclobutadipyrimidine (in DNA) = 2 pyrimidine residues (in DNA).. Functionally, involved in repair of UV radiation-induced DNA damage. Catalyzes the light-dependent monomerization (300-600 nm) of cyclobutyl pyrimidine dimers (in cis-syn configuration), which are formed between adjacent bases on the same DNA strand upon exposure to ultraviolet radiation. This chain is Deoxyribodipyrimidine photo-lyase (phr), found in Alkalihalophilus pseudofirmus (strain ATCC BAA-2126 / JCM 17055 / OF4) (Bacillus pseudofirmus).